Reading from the N-terminus, the 206-residue chain is Nucleoside triphosphate pyrophosphatase (206 aa).

The active-site Proton acceptor is the Asp76.

This sequence belongs to the Maf family. Requires a divalent metal cation as cofactor.

It is found in the cytoplasm. The enzyme catalyses a ribonucleoside 5'-triphosphate + H2O = a ribonucleoside 5'-phosphate + diphosphate + H(+). It catalyses the reaction a 2'-deoxyribonucleoside 5'-triphosphate + H2O = a 2'-deoxyribonucleoside 5'-phosphate + diphosphate + H(+). Its function is as follows. Nucleoside triphosphate pyrophosphatase. May have a dual role in cell division arrest and in preventing the incorporation of modified nucleotides into cellular nucleic acids. This is Nucleoside triphosphate pyrophosphatase from Streptomyces coelicolor (strain ATCC BAA-471 / A3(2) / M145).